The sequence spans 658 residues: Translation factor GUF1, mitochondrial (658 aa).

Residues 1 to 40 constitute a mitochondrion transit peptide; sequence MRGCLQTVRWLTSAWQRPPSYPPLSRAAPCRFFNVSIPRN. One can recognise a tr-type G domain in the interval 60-240; sequence DRFRNFCIVA…TVVEQIPAPV (181 aa). GTP contacts are provided by residues 69-76, 133-137, and 187-190; these read AHVDHGKS, DTPGH, and NKVD.

Belongs to the TRAFAC class translation factor GTPase superfamily. Classic translation factor GTPase family. LepA subfamily.

It localises to the mitochondrion inner membrane. It carries out the reaction GTP + H2O = GDP + phosphate + H(+). In terms of biological role, promotes mitochondrial protein synthesis. May act as a fidelity factor of the translation reaction, by catalyzing a one-codon backward translocation of tRNAs on improperly translocated ribosomes. Binds to mitochondrial ribosomes in a GTP-dependent manner. The polypeptide is Translation factor GUF1, mitochondrial (Paracoccidioides brasiliensis (strain Pb18)).